The following is an 86-amino-acid chain: Large ribosomal subunit protein bL27 (86 aa).

It belongs to the bacterial ribosomal protein bL27 family.

In Xanthomonas oryzae pv. oryzae (strain PXO99A), this protein is Large ribosomal subunit protein bL27.